The primary structure comprises 781 residues: MNNKKNEKTTNNKEIANVLVTRGIVFYPNTKIRIEIGREKSIAAINDSKEKKQNMIVVSQENPSIDSPSKNEIFTVGTLCSFEIDNKHPDGSYSIIFTGIKRVKINKLSEKASDGEIKTKFFYADYSEIEEDTKLSKSNEEAIKDLHAKFENELNNLTFFPKKDLALSKENRHTIVDWLPIALKFSLEEKQQLLEEPSLSKRIEKILSFTIDERVSQKIDSEISKKINTNLSKQQKEFYLRERVRAIKEELGDISSKEDDAESIRDRVRNNPYPEHIKKRILSEVNKLESSSNSNEYSMSKTYIDWLIDLPYWQKTDDVDSLADVENVLNNNHYGLEKVKERIIEYLAVRMKSKSAKGSIICLVGPPGVGKTSLAQSIAEALKKKFVKVSLGGMRDEAELKGHRKTYIGAMPGRIIKAMSKAGVVNPVFLLDEIDKLGSDHKGDPASAMLDILDPEQNNRFSDNYIEEDYDLSNVLFIATANYEENIPEPLHDRLEIIRLSSYTENEKLSIAKNYLVKKILVESALKKDELKFTDDGLSYIIKRYTREAGVREVERAIRQIARKFVVRQQKEKLTSQTIGVEEVKYYLKKEIYDYTKKDKEYMPGVVNGMAYTTAGGDLLPIEATFAPGKGKIEITGNLKETMKESVNVALGYVKTNAVKFGIDPKIFGEIDLHVHVPSGGIPKDGPSAGIALTTAILSALKNVKIPSNVAMTGEITLRGRVLIIGGVKEKTISAYRGGANDIFMPKEDERYLDDVPEEVRSKIKITLVDTYDDVYNRLFK.

The Lon N-terminal domain occupies 16-214; it reads ANVLVTRGIV…KILSFTIDER (199 aa). 365 to 372 is a binding site for ATP; the sequence is GPPGVGKT. The region spanning 601–781 is the Lon proteolytic domain; it reads EYMPGVVNGM…YDDVYNRLFK (181 aa). Active-site residues include Ser688 and Lys731.

This sequence belongs to the peptidase S16 family. Homohexamer. Organized in a ring with a central cavity.

Its subcellular location is the cytoplasm. The catalysed reaction is Hydrolysis of proteins in presence of ATP.. Its function is as follows. ATP-dependent serine protease that mediates the selective degradation of mutant and abnormal proteins as well as certain short-lived regulatory proteins. Required for cellular homeostasis and for survival from DNA damage and developmental changes induced by stress. Degrades polypeptides processively to yield small peptide fragments that are 5 to 10 amino acids long. Binds to DNA in a double-stranded, site-specific manner. In Malacoplasma penetrans (strain HF-2) (Mycoplasma penetrans), this protein is Lon protease.